Here is a 291-residue protein sequence, read N- to C-terminus: Methionine aminopeptidase (291 aa).

Histidine 118 is a binding site for substrate. Positions 135, 146, and 209 each coordinate a divalent metal cation. Residue histidine 216 coordinates substrate. Residues glutamate 241 and glutamate 273 each coordinate a divalent metal cation.

It belongs to the peptidase M24A family. Methionine aminopeptidase type 1 subfamily. In terms of assembly, monomer. Co(2+) serves as cofactor. The cofactor is Zn(2+). Mn(2+) is required as a cofactor. Requires Fe(2+) as cofactor.

The enzyme catalyses Release of N-terminal amino acids, preferentially methionine, from peptides and arylamides.. In terms of biological role, removes the N-terminal methionine from nascent proteins. The N-terminal methionine is often cleaved when the second residue in the primary sequence is small and uncharged (Met-Ala-, Cys, Gly, Pro, Ser, Thr, or Val). Requires deformylation of the N(alpha)-formylated initiator methionine before it can be hydrolyzed. This Chlamydia pneumoniae (Chlamydophila pneumoniae) protein is Methionine aminopeptidase.